Here is a 96-residue protein sequence, read N- to C-terminus: MKLRPLHDRVIVKRLEQETKTASGIVIPDNAAEKPDQGEVLAVGPGKRNDKGDFIALNCKVGDRVLFGKYSGQTVKVDGDELLVMREEDLFAVVEK.

The protein belongs to the GroES chaperonin family. In terms of assembly, heptamer of 7 subunits arranged in a ring. Interacts with the chaperonin GroEL.

It localises to the cytoplasm. Functionally, together with the chaperonin GroEL, plays an essential role in assisting protein folding. The GroEL-GroES system forms a nano-cage that allows encapsulation of the non-native substrate proteins and provides a physical environment optimized to promote and accelerate protein folding. GroES binds to the apical surface of the GroEL ring, thereby capping the opening of the GroEL channel. This is Co-chaperonin GroES from Methylibium petroleiphilum (strain ATCC BAA-1232 / LMG 22953 / PM1).